The primary structure comprises 524 residues: Bifunctional purine biosynthesis protein PurH (524 aa).

An MGS-like domain is found at 1 to 145 (MIKQALLSVS…KNHRDVTVIV (145 aa)).

This sequence belongs to the PurH family.

The catalysed reaction is (6R)-10-formyltetrahydrofolate + 5-amino-1-(5-phospho-beta-D-ribosyl)imidazole-4-carboxamide = 5-formamido-1-(5-phospho-D-ribosyl)imidazole-4-carboxamide + (6S)-5,6,7,8-tetrahydrofolate. It carries out the reaction IMP + H2O = 5-formamido-1-(5-phospho-D-ribosyl)imidazole-4-carboxamide. Its pathway is purine metabolism; IMP biosynthesis via de novo pathway; 5-formamido-1-(5-phospho-D-ribosyl)imidazole-4-carboxamide from 5-amino-1-(5-phospho-D-ribosyl)imidazole-4-carboxamide (10-formyl THF route): step 1/1. The protein operates within purine metabolism; IMP biosynthesis via de novo pathway; IMP from 5-formamido-1-(5-phospho-D-ribosyl)imidazole-4-carboxamide: step 1/1. This chain is Bifunctional purine biosynthesis protein PurH, found in Cupriavidus taiwanensis (strain DSM 17343 / BCRC 17206 / CCUG 44338 / CIP 107171 / LMG 19424 / R1) (Ralstonia taiwanensis (strain LMG 19424)).